A 485-amino-acid chain; its full sequence is Tektin-5 (485 aa).

4 coiled-coil regions span residues 114 to 185 (RLTD…EVNC), 225 to 247 (QEQM…DAQH), 307 to 385 (QNMR…MAKE), and 421 to 444 (TIDD…QLLV).

The protein belongs to the tektin family. Microtubule inner protein component of sperm flagellar doublet microtubules. Interacts with TEKT3. In terms of processing, ubiquitinated, leading to its degradation. Deubiquitinated by USP16, promoting its stability.

It is found in the cytoplasm. It localises to the cytoskeleton. The protein resides in the flagellum axoneme. Sperm-specific microtubule inner protein (MIP) part of the dynein-decorated doublet microtubules (DMTs) in flagellar axoneme. Forms an extensive interaction network in different conformations that reinforces the helix bundle composed by other tektin proteins (TEKT1 to TEKT4) and MIPs to anchor the tektin bundle onto the tubulin wall of A-tubule of the sperm flagellum. This Homo sapiens (Human) protein is Tektin-5 (TEKT5).